The primary structure comprises 196 residues: Proteasome subunit beta 2 (196 aa).

A propeptide spans 1–6 (removed in mature form; by autocatalysis); the sequence is MEELPS. Thr7 acts as the Nucleophile in catalysis.

The protein belongs to the peptidase T1B family. In terms of assembly, the 20S proteasome core is composed of 14 alpha and 14 beta subunits that assemble into four stacked heptameric rings, resulting in a barrel-shaped structure. The two inner rings, each composed of seven catalytic beta subunits, are sandwiched by two outer rings, each composed of seven alpha subunits. The catalytic chamber with the active sites is on the inside of the barrel. Has a gated structure, the ends of the cylinder being occluded by the N-termini of the alpha-subunits. Is capped at one or both ends by the proteasome regulatory ATPase, PAN.

It is found in the cytoplasm. It carries out the reaction Cleavage of peptide bonds with very broad specificity.. With respect to regulation, the formation of the proteasomal ATPase PAN-20S proteasome complex, via the docking of the C-termini of PAN into the intersubunit pockets in the alpha-rings, triggers opening of the gate for substrate entry. Interconversion between the open-gate and close-gate conformations leads to a dynamic regulation of the 20S proteasome proteolysis activity. In terms of biological role, component of the proteasome core, a large protease complex with broad specificity involved in protein degradation. This Metallosphaera sedula (strain ATCC 51363 / DSM 5348 / JCM 9185 / NBRC 15509 / TH2) protein is Proteasome subunit beta 2.